Here is a 184-residue protein sequence, read N- to C-terminus: Large ribosomal subunit protein uL6 (184 aa).

It belongs to the universal ribosomal protein uL6 family. In terms of assembly, part of the 50S ribosomal subunit.

In terms of biological role, this protein binds to the 23S rRNA, and is important in its secondary structure. It is located near the subunit interface in the base of the L7/L12 stalk, and near the tRNA binding site of the peptidyltransferase center. This chain is Large ribosomal subunit protein uL6, found in Onion yellows phytoplasma (strain OY-M).